Reading from the N-terminus, the 275-residue chain is Bis(5'-nucleosyl)-tetraphosphatase, symmetrical (275 aa).

It belongs to the Ap4A hydrolase family.

The enzyme catalyses P(1),P(4)-bis(5'-adenosyl) tetraphosphate + H2O = 2 ADP + 2 H(+). Functionally, hydrolyzes diadenosine 5',5'''-P1,P4-tetraphosphate to yield ADP. This chain is Bis(5'-nucleosyl)-tetraphosphatase, symmetrical, found in Nitrosospira multiformis (strain ATCC 25196 / NCIMB 11849 / C 71).